Reading from the N-terminus, the 333-residue chain is Biotin synthase (333 aa).

Residues 46-275 form the Radical SAM core domain; that stretch reads YYGKKVKLNM…TKEIRISGGR (230 aa). [4Fe-4S] cluster is bound by residues Cys-64, Cys-68, and Cys-71. Cys-108, Cys-140, Cys-200, and Arg-270 together coordinate [2Fe-2S] cluster.

This sequence belongs to the radical SAM superfamily. Biotin synthase family. In terms of assembly, homodimer. Requires [4Fe-4S] cluster as cofactor. It depends on [2Fe-2S] cluster as a cofactor.

The enzyme catalyses (4R,5S)-dethiobiotin + (sulfur carrier)-SH + 2 reduced [2Fe-2S]-[ferredoxin] + 2 S-adenosyl-L-methionine = (sulfur carrier)-H + biotin + 2 5'-deoxyadenosine + 2 L-methionine + 2 oxidized [2Fe-2S]-[ferredoxin]. It functions in the pathway cofactor biosynthesis; biotin biosynthesis; biotin from 7,8-diaminononanoate: step 2/2. In terms of biological role, catalyzes the conversion of dethiobiotin (DTB) to biotin by the insertion of a sulfur atom into dethiobiotin via a radical-based mechanism. The polypeptide is Biotin synthase (Halalkalibacterium halodurans (strain ATCC BAA-125 / DSM 18197 / FERM 7344 / JCM 9153 / C-125) (Bacillus halodurans)).